A 95-amino-acid chain; its full sequence is Small ribosomal subunit protein bS16 (95 aa).

Belongs to the bacterial ribosomal protein bS16 family.

The polypeptide is Small ribosomal subunit protein bS16 (Thermotoga neapolitana (strain ATCC 49049 / DSM 4359 / NBRC 107923 / NS-E)).